Reading from the N-terminus, the 176-residue chain is ATP-dependent protease subunit HslV (176 aa).

Residue threonine 2 is part of the active site. Na(+) is bound by residues glycine 157, cysteine 160, and threonine 163.

Belongs to the peptidase T1B family. HslV subfamily. A double ring-shaped homohexamer of HslV is capped on each side by a ring-shaped HslU homohexamer. The assembly of the HslU/HslV complex is dependent on binding of ATP.

It localises to the cytoplasm. The enzyme catalyses ATP-dependent cleavage of peptide bonds with broad specificity.. Its activity is regulated as follows. Allosterically activated by HslU binding. In terms of biological role, protease subunit of a proteasome-like degradation complex believed to be a general protein degrading machinery. In Pseudomonas syringae pv. tomato (strain ATCC BAA-871 / DC3000), this protein is ATP-dependent protease subunit HslV.